The sequence spans 561 residues: Nucleoprotein (561 aa).

The tract at residues 53 to 237 (MRKDKRSEAD…ITQEPAQINI (185 aa)) is binding site for the cap structure m7GTP. Mn(2+) contacts are provided by Asp-380 and Glu-382. Glu-390, Cys-497, His-500, and Cys-521 together coordinate Zn(2+). Mn(2+) is bound at residue Asp-525.

The protein belongs to the arenaviridae nucleocapsid protein family. As to quaternary structure, homomultimerizes to form the nucleocapsid. Binds to viral genomic RNA. Interacts with glycoprotein G2. Interacts with protein Z; this interaction probably directs the encapsidated genome to budding sites. Interacts with protein L; this interaction does not interfere with Z-L interaction. Interacts with host IKBKE (via Protein kinase domain); the interaction inhibits IKBKE kinase activity.

The protein resides in the virion. It localises to the host cytoplasm. In terms of biological role, encapsidates the genome, protecting it from nucleases. The encapsidated genomic RNA is termed the nucleocapsid (NC). Serves as template for viral transcription and replication. The increased presence of protein N in host cell does not seem to trigger the switch from transcription to replication as observed in other negative strain RNA viruses. Through the interaction with host IKBKE, strongly inhibits the phosphorylation and nuclear translocation of host IRF3, a protein involved in interferon activation pathway, leading to the inhibition of interferon-beta and IRF3-dependent promoters activation. Also encodes a functional 3'-5' exoribonuclease that degrades preferentially dsRNA substrates and thereby participates in the suppression of interferon induction. The polypeptide is Nucleoprotein (Allpahuayo mammarenavirus (isolate Rat/Peru/CLHP-2472/1997) (ALLV)).